Here is a 706-residue protein sequence, read N- to C-terminus: DNA ligase (706 aa).

Residues 48–52, 97–98, and glutamate 131 each bind NAD(+); these read DAAYD and SL. Lysine 133 functions as the N6-AMP-lysine intermediate in the catalytic mechanism. Residues arginine 154, glutamate 191, lysine 307, and lysine 331 each coordinate NAD(+). 4 residues coordinate Zn(2+): cysteine 425, cysteine 428, cysteine 443, and cysteine 449. The BRCT domain occupies 628–706; the sequence is RADSAVAGKT…EDEWLKLIEG (79 aa).

This sequence belongs to the NAD-dependent DNA ligase family. LigA subfamily. Mg(2+) serves as cofactor. The cofactor is Mn(2+).

The catalysed reaction is NAD(+) + (deoxyribonucleotide)n-3'-hydroxyl + 5'-phospho-(deoxyribonucleotide)m = (deoxyribonucleotide)n+m + AMP + beta-nicotinamide D-nucleotide.. Functionally, DNA ligase that catalyzes the formation of phosphodiester linkages between 5'-phosphoryl and 3'-hydroxyl groups in double-stranded DNA using NAD as a coenzyme and as the energy source for the reaction. It is essential for DNA replication and repair of damaged DNA. This chain is DNA ligase, found in Afipia carboxidovorans (strain ATCC 49405 / DSM 1227 / KCTC 32145 / OM5) (Oligotropha carboxidovorans).